The primary structure comprises 83 residues: Cytochrome b559 subunit alpha (83 aa).

The chain crosses the membrane as a helical span at residues 21–35 (VIHSITIPSLFIAGW). H23 is a binding site for heme.

Belongs to the PsbE/PsbF family. In terms of assembly, heterodimer of an alpha subunit and a beta subunit. PSII is composed of 1 copy each of membrane proteins PsbA, PsbB, PsbC, PsbD, PsbE, PsbF, PsbH, PsbI, PsbJ, PsbK, PsbL, PsbM, PsbT, PsbX, PsbY, PsbZ, Psb30/Ycf12, at least 3 peripheral proteins of the oxygen-evolving complex and a large number of cofactors. It forms dimeric complexes. The cofactor is heme b.

The protein resides in the plastid. Its subcellular location is the chloroplast thylakoid membrane. Its function is as follows. This b-type cytochrome is tightly associated with the reaction center of photosystem II (PSII). PSII is a light-driven water:plastoquinone oxidoreductase that uses light energy to abstract electrons from H(2)O, generating O(2) and a proton gradient subsequently used for ATP formation. It consists of a core antenna complex that captures photons, and an electron transfer chain that converts photonic excitation into a charge separation. The protein is Cytochrome b559 subunit alpha of Ginkgo biloba (Ginkgo).